A 327-amino-acid chain; its full sequence is MQMPAMMSLLLVSVGLMEALQAQSHPITRRDLFSQEIQLDMALASFDDQYAGCAAAMTAALPDLNHTEFQANQVYADSWTLASSQWQERQARWPEWSLSPTRPSPPPLGFRDEHGVALLAYTANSPLHKEFNAAVREAGRSRAHYLHHFSFKTLHFLLTEALQLLGSGQRPPRCHQVFRGVHGLRFRPAGPRATVRLGGFASASLKHVAAQQFGEDTFFGIWTCLGAPIKGYSFFPGEEEVLIPPFETFQVINASRLAQGPARIYLRALGKHSTYNCEYIKDKKCKSGPCHLDNSAMGQSPLSAVWSLLLLLWFLVVRAFPDGPGLL.

An N-terminal signal peptide occupies residues 1–22 (MQMPAMMSLLLVSVGLMEALQA). 2 disulfide bridges follow: Cys53–Cys277 and Cys174–Cys224. Asn65 is a glycosylation site (N-linked (GlcNAc...) asparagine). Residues 73–273 (QVYADSWTLA…IYLRALGKHS (201 aa)) form the TR mART core domain. 2 residues coordinate NAD(+): Tyr121 and Arg179. Catalysis depends on residues Arg179 and Ser202. Ser233 is an NAD(+) binding site. Glu240 is an active-site residue. Asn253 carries an N-linked (GlcNAc...) asparagine glycan. Ser295 is lipidated: GPI-anchor amidated serine. A propeptide spans 296-327 (AMGQSPLSAVWSLLLLLWFLVVRAFPDGPGLL) (removed in mature form).

The protein belongs to the Arg-specific ADP-ribosyltransferase family.

The protein resides in the sarcoplasmic reticulum membrane. It catalyses the reaction L-arginyl-[protein] + NAD(+) = N(omega)-(ADP-D-ribosyl)-L-arginyl-[protein] + nicotinamide + H(+). Functionally, has ADP-ribosyltransferase activity toward GLP1R. The protein is GPI-linked NAD(P)(+)--arginine ADP-ribosyltransferase 1 (ART1) of Homo sapiens (Human).